The chain runs to 455 residues: Glycosyl hydrolase family 109 protein (455 aa).

The tat-type signal signal peptide spans 1–33 (MAGIDRRGFLKASMASVAAAALAGCASQQGTSA). Residues 62–63 (ER), Asp-84, Gln-112, 133–136 (WALH), 153–154 (EV), and Asn-182 each bind NAD(+). Substrate contacts are provided by residues Tyr-211, Arg-230, 242–245 (YPTH), and Tyr-324. Tyr-242 contributes to the NAD(+) binding site.

This sequence belongs to the Gfo/Idh/MocA family. Glycosyl hydrolase 109 subfamily. It depends on NAD(+) as a cofactor. In terms of processing, predicted to be exported by the Tat system. The position of the signal peptide cleavage has not been experimentally proven.

In terms of biological role, glycosidase. This chain is Glycosyl hydrolase family 109 protein, found in Shewanella amazonensis (strain ATCC BAA-1098 / SB2B).